We begin with the raw amino-acid sequence, 447 residues long: UDP-N-acetylglucosamine 1-carboxyvinyltransferase (447 aa).

27–28 (KN) serves as a coordination point for phosphoenolpyruvate. Residue R97 participates in UDP-N-acetyl-alpha-D-glucosamine binding. Catalysis depends on C121, which acts as the Proton donor. Residue C121 is modified to 2-(S-cysteinyl)pyruvic acid O-phosphothioketal. Residues 126 to 130 (RPVDL), D314, and V336 contribute to the UDP-N-acetyl-alpha-D-glucosamine site.

Belongs to the EPSP synthase family. MurA subfamily.

It is found in the cytoplasm. The catalysed reaction is phosphoenolpyruvate + UDP-N-acetyl-alpha-D-glucosamine = UDP-N-acetyl-3-O-(1-carboxyvinyl)-alpha-D-glucosamine + phosphate. It functions in the pathway cell wall biogenesis; peptidoglycan biosynthesis. In terms of biological role, cell wall formation. Adds enolpyruvyl to UDP-N-acetylglucosamine. The sequence is that of UDP-N-acetylglucosamine 1-carboxyvinyltransferase from Trichormus variabilis (strain ATCC 29413 / PCC 7937) (Anabaena variabilis).